A 1035-amino-acid chain; its full sequence is MYKKVDSSKSFVDIERDVLKLWHEKEIVKKSFNSNQDGEYFSFYDGPPTANGRPHVGHIITRVMKDLIPRYKVMKGYKVPRKAGWDTHGLPVELEIEKKLGISGKPQIEEYGIEKFVKECKESVFSYVSLWKDMSEKLGYWVDMENPYVTYHNDYIESVWWALKQMWDKDLLYKGHKIVPYCPRCGTALSSHEVAQGYKDVKEATAFVKFKVKGEENKYILAWTTTPWTLPSNVALAINKAYDYVEVINNGEHLILAKALLTVLEGEYEVVSEFKGEKLLGMEYEQLFKFANPDKKAFYVVHGDFVTLSDGTGIVHIAPAYGEDDNMLGKKYDLPLINLVNGEGKFVDEVEPWKGLFVKKADPKILEYMKENGTLYKSEKFTHSYPHCWRCDTPLLYYPRDSWFVRMTSLRDKLVENNNKIHWYPDNIRTGRFGKFVENVIDWGISRDRYWGTPLPIWQCECGHRDCVGSIEELKEKGINVPENIELHKPYIDEVKLTCPKCGKPMTRTEEVIDCWFDSGSMPFAQLHYPFENKEVFENTFPAQFISEAVDQTRGWFYTLLAISTSIFDKSSFENCIVLGHVLDKHGLKMSKHKGNVVDPFDVLDNQGADACRWHFYTSSAPWLPTRFSQEDVAETQRKFLSTLWNVYSFYVLYAEIDKFNPNDYKDFVSGNVMDKWIVSRLNTLTKDVGNYLDSYGITQAALEIQDFVDDLSNWYVRRNRSRYWTQELTDDKVGAYVTLYRVLVTLSKVAAPFIPFMTEQIYQSLVTSINEGAEESVHLCKWPEYDESLIDSSLEEEMKLAISIVKLGRSARNGANIKNRQPLYEMRVSTKALPDYYGDIIRDELNVKKVEFGADLSKYVNFEIKPNLPVLGKSYGKLIPKIRKEISSMDQMKLAERVRSGEAVKIDVDGTEIELNSENLLVTMQGLEGFAFAGIGEIGIVLETTITDELREEGYLREVLSKVQNMRKESGFEVADKIEIYVSGNEKLENVIRKFEDTIKKETLATDIIYSENKEAAIYNINGEELNVFVKKNC.

Residues 48–58 (PTANGRPHVGH) carry the 'HIGH' region motif. The 'KMSKS' region signature appears at 589–593 (KMSKH). K592 contacts ATP.

It belongs to the class-I aminoacyl-tRNA synthetase family. IleS type 2 subfamily. As to quaternary structure, monomer. Zn(2+) serves as cofactor.

The protein resides in the cytoplasm. The enzyme catalyses tRNA(Ile) + L-isoleucine + ATP = L-isoleucyl-tRNA(Ile) + AMP + diphosphate. Its function is as follows. Catalyzes the attachment of isoleucine to tRNA(Ile). As IleRS can inadvertently accommodate and process structurally similar amino acids such as valine, to avoid such errors it has two additional distinct tRNA(Ile)-dependent editing activities. One activity is designated as 'pretransfer' editing and involves the hydrolysis of activated Val-AMP. The other activity is designated 'posttransfer' editing and involves deacylation of mischarged Val-tRNA(Ile). This Clostridium acetobutylicum (strain ATCC 824 / DSM 792 / JCM 1419 / IAM 19013 / LMG 5710 / NBRC 13948 / NRRL B-527 / VKM B-1787 / 2291 / W) protein is Isoleucine--tRNA ligase.